A 111-amino-acid chain; its full sequence is Nucleoid-associated protein Cpha266_1171 (111 aa).

It belongs to the YbaB/EbfC family. As to quaternary structure, homodimer.

It is found in the cytoplasm. Its subcellular location is the nucleoid. Functionally, binds to DNA and alters its conformation. May be involved in regulation of gene expression, nucleoid organization and DNA protection. The sequence is that of Nucleoid-associated protein Cpha266_1171 from Chlorobium phaeobacteroides (strain DSM 266 / SMG 266 / 2430).